The primary structure comprises 278 residues: BPI fold-containing family A member 1 (278 aa).

An N-terminal signal peptide occupies residues 1–19 (MFLVGSLVVLCGLLAHSTA). Repeat repeat units follow at residues 23–28 (GLPLPL), 30–36 (QGPPLPL), 39–44 (GPPLPL), and 47–52 (GQLLPL). Positions 23–52 (GLPLPLGQGPPLPLNQGPPLPLNQGQLLPL) are 4 X 6 AA repeats of G-[LPQ]-[PL]-L-P-L. The segment at 112 to 117 (LVGGLL) is important for surfactant activity and antibacterial properties. Asparagine 182 and asparagine 228 each carry an N-linked (GlcNAc...) asparagine glycan. Cysteine 204 and cysteine 246 are oxidised to a cystine.

Belongs to the BPI/LBP/Plunc superfamily. Plunc family. As to quaternary structure, monomer. Interacts (via N-terminus) with SCNN1B, a subunit of the heterotrimeric epithelial sodium channel (ENaC); this inhibits proteolytic activation of ENaC. In terms of tissue distribution, detected in airway epithelia (trachea and lung) and in bronchoalveolar fluid (at protein level). Upper airways, nasopharyngeal epithelium and thymus. Highest expression in the trachea and progressive decrease from proximal (bronchial) to distal (bronchiolar) airways. No expression is detected in the terminal bronchioles, respiratory bronchioles or lung alveoli.

The protein localises to the secreted. Lipid-binding protein which shows high specificity for the surfactant phospholipid dipalmitoylphosphatidylcholine (DPPC). Plays a role in the innate immune responses of the upper airways. Reduces the surface tension in secretions from airway epithelia and inhibits the formation of biofilm by pathogenic Gram-negative bacteria, such as P.aeruginosa and K.pneumoniae. Negatively regulates proteolytic cleavage of SCNN1G, an event that is required for activation of the epithelial sodium channel (ENaC), and thereby contributes to airway surface liquid homeostasis and proper clearance of mucus. Plays a role in the airway inflammatory response after exposure to irritants. May attract macrophages and neutrophils. The polypeptide is BPI fold-containing family A member 1 (Bpifa1) (Mus musculus (Mouse)).